Reading from the N-terminus, the 76-residue chain is UPF0235 protein MRA_1997 (76 aa).

The protein belongs to the UPF0235 family.

This Mycobacterium tuberculosis (strain ATCC 25177 / H37Ra) protein is UPF0235 protein MRA_1997.